The sequence spans 374 residues: GDSL esterase/lipase At3g50400 (374 aa).

Residues Met-1–Ala-26 form the signal peptide. Ser-41 serves as the catalytic Nucleophile. N-linked (GlcNAc...) asparagine glycans are attached at residues Asn-104 and Asn-125. Catalysis depends on residues Asp-339 and His-342.

The protein belongs to the 'GDSL' lipolytic enzyme family.

The protein resides in the secreted. The protein is GDSL esterase/lipase At3g50400 of Arabidopsis thaliana (Mouse-ear cress).